The sequence spans 70 residues: uncharacterized protein (70 aa).

This is an uncharacterized protein from Bacillus subtilis (strain 168).